A 460-amino-acid polypeptide reads, in one-letter code: Putative glycoside/cation symporter YagG (460 aa).

Residues M1 to K9 are Cytoplasmic-facing. A run of 2 helical transmembrane segments spans residues I10–L30 and A31–V51. At S52–R78 the chain is on the cytoplasmic side. The chain crosses the membrane as a helical span at residues P79–P99. The Periplasmic segment spans residues D100–K106. Residues I107 to P127 traverse the membrane as a helical segment. Topologically, residues Y128 to F150 are cytoplasmic. A helical transmembrane segment spans residues F151–I171. At G172 to G179 the chain is on the periplasmic side. A helical transmembrane segment spans residues Y180–F200. The Cytoplasmic segment spans residues T201–E262. Residues L263 to S283 form a helical membrane-spanning segment. Topologically, residues R284–L308 are periplasmic. Residues I309–F329 form a helical membrane-spanning segment. Over V330–L366 the chain is Cytoplasmic. Residues F367–V387 traverse the membrane as a helical segment. At N388–K405 the chain is on the periplasmic side. The helical transmembrane segment at I406–Y426 threads the bilayer. Residues K427–H460 lie on the Cytoplasmic side of the membrane.

It belongs to the sodium:galactoside symporter (TC 2.A.2) family.

It is found in the cell inner membrane. This Escherichia coli (strain K12) protein is Putative glycoside/cation symporter YagG (yagG).